A 609-amino-acid polypeptide reads, in one-letter code: UvrABC system protein C (609 aa).

One can recognise a GIY-YIG domain in the interval 16–94 (SSAGVYRMYD…IKQYMPKYNV (79 aa)). A UVR domain is found at 203 to 238 (QQVISALVDKMELAAERQAYEQAARFRDQIMALRKV).

Belongs to the UvrC family. In terms of assembly, interacts with UvrB in an incision complex.

It is found in the cytoplasm. The UvrABC repair system catalyzes the recognition and processing of DNA lesions. UvrC both incises the 5' and 3' sides of the lesion. The N-terminal half is responsible for the 3' incision and the C-terminal half is responsible for the 5' incision. This is UvrABC system protein C from Shewanella baltica (strain OS185).